The sequence spans 84 residues: Sulfur carrier protein TusA (84 aa).

Cys19 acts as the Cysteine persulfide intermediate in catalysis.

It belongs to the sulfur carrier protein TusA family. Interacts with IscS.

It localises to the cytoplasm. Its pathway is tRNA modification. Functionally, sulfur carrier protein involved in sulfur trafficking in the cell. Part of a sulfur-relay system required for 2-thiolation during synthesis of 2-thiouridine of the modified wobble base 5-methylaminomethyl-2-thiouridine (mnm(5)s(2)U) in tRNA. Interacts with IscS and stimulates its cysteine desulfurase activity. Accepts an activated sulfur from IscS, which is then transferred to TusD, and thus determines the direction of sulfur flow from IscS to 2-thiouridine formation. Also appears to be involved in sulfur transfer for the biosynthesis of molybdopterin. This chain is Sulfur carrier protein TusA, found in Sodalis glossinidius (strain morsitans).